The sequence spans 89 residues: DNA/RNA-binding protein Alba 2 (89 aa).

Position 12 is an N6-acetyllysine (K12).

It belongs to the histone-like Alba family. Acetylated. Acetylation at Lys-12 decreases DNA-binding affinity.

The protein resides in the cytoplasm. Its subcellular location is the chromosome. In terms of biological role, binds double-stranded DNA tightly but without sequence specificity. Involved in DNA compaction. The polypeptide is DNA/RNA-binding protein Alba 2 (Saccharolobus shibatae (strain ATCC 51178 / DSM 5389 / JCM 8931 / NBRC 15437 / B12) (Sulfolobus shibatae)).